Consider the following 76-residue polypeptide: Large ribosomal subunit protein uL29 (76 aa).

This sequence belongs to the universal ribosomal protein uL29 family.

The sequence is that of Large ribosomal subunit protein uL29 from Corynebacterium efficiens (strain DSM 44549 / YS-314 / AJ 12310 / JCM 11189 / NBRC 100395).